The chain runs to 111 residues: Large ribosomal subunit protein uL22 (111 aa).

This sequence belongs to the universal ribosomal protein uL22 family. In terms of assembly, part of the 50S ribosomal subunit.

Its function is as follows. This protein binds specifically to 23S rRNA; its binding is stimulated by other ribosomal proteins, e.g. L4, L17, and L20. It is important during the early stages of 50S assembly. It makes multiple contacts with different domains of the 23S rRNA in the assembled 50S subunit and ribosome. In terms of biological role, the globular domain of the protein is located near the polypeptide exit tunnel on the outside of the subunit, while an extended beta-hairpin is found that lines the wall of the exit tunnel in the center of the 70S ribosome. The sequence is that of Large ribosomal subunit protein uL22 from Xanthomonas oryzae pv. oryzae (strain PXO99A).